Here is an 833-residue protein sequence, read N- to C-terminus: Leucine--tRNA ligase (833 aa).

The 'HIGH' region motif lies at 41–52 (PYPSGAGLHVGH). Residues 610-614 (KMSKS) carry the 'KMSKS' region motif. K613 is a binding site for ATP.

This sequence belongs to the class-I aminoacyl-tRNA synthetase family.

It is found in the cytoplasm. It catalyses the reaction tRNA(Leu) + L-leucine + ATP = L-leucyl-tRNA(Leu) + AMP + diphosphate. The polypeptide is Leucine--tRNA ligase (Streptococcus agalactiae serotype Ia (strain ATCC 27591 / A909 / CDC SS700)).